Reading from the N-terminus, the 244-residue chain is 2,5-diamino-6-ribosylamino-4(3H)-pyrimidinone 5'-phosphate reductase (244 aa).

Residues threonine 74, aspartate 78, isoleucine 160, and 183 to 187 contribute to the NADP(+) site; that span reads GSHVI.

It belongs to the HTP reductase family. In terms of assembly, homodimer.

The catalysed reaction is 2,5-diamino-6-(1-D-ribitylamino)pyrimidin-4(3H)-one 5'-phosphate + NADP(+) = 2,5-diamino-6-(1-D-ribosylamino)pyrimidin-4(3H)-one 5'-phosphate + NADPH + H(+). It carries out the reaction 2,5-diamino-6-(1-D-ribitylamino)pyrimidin-4(3H)-one 5'-phosphate + NAD(+) = 2,5-diamino-6-(1-D-ribosylamino)pyrimidin-4(3H)-one 5'-phosphate + NADH + H(+). It functions in the pathway cofactor biosynthesis; riboflavin biosynthesis. Catalyzes an early step in riboflavin biosynthesis, the NADPH-dependent reduction of the ribose side chain of 2,5-diamino-6-ribosylamino-4(3H)-pyrimidinone 5'-phosphate, yielding 2,5-diamino-6-ribitylamino-4(3H)-pyrimidinone 5'-phosphate. The protein is 2,5-diamino-6-ribosylamino-4(3H)-pyrimidinone 5'-phosphate reductase (RIB7) of Candida glabrata (strain ATCC 2001 / BCRC 20586 / JCM 3761 / NBRC 0622 / NRRL Y-65 / CBS 138) (Yeast).